The sequence spans 109 residues: Ribonuclease P protein component 2 (109 aa).

The protein belongs to the eukaryotic/archaeal RNase P protein component 2 family. As to quaternary structure, consists of a catalytic RNA component and at least 4-5 protein subunits.

The protein localises to the cytoplasm. It catalyses the reaction Endonucleolytic cleavage of RNA, removing 5'-extranucleotides from tRNA precursor.. Functionally, part of ribonuclease P, a protein complex that generates mature tRNA molecules by cleaving their 5'-ends. The protein is Ribonuclease P protein component 2 of Archaeoglobus fulgidus (strain ATCC 49558 / DSM 4304 / JCM 9628 / NBRC 100126 / VC-16).